Here is a 402-residue protein sequence, read N- to C-terminus: NADH-quinone oxidoreductase subunit D (402 aa).

This sequence belongs to the complex I 49 kDa subunit family. As to quaternary structure, NDH-1 is composed of 14 different subunits. Subunits NuoB, C, D, E, F, and G constitute the peripheral sector of the complex.

The protein localises to the cell inner membrane. It carries out the reaction a quinone + NADH + 5 H(+)(in) = a quinol + NAD(+) + 4 H(+)(out). Its function is as follows. NDH-1 shuttles electrons from NADH, via FMN and iron-sulfur (Fe-S) centers, to quinones in the respiratory chain. The immediate electron acceptor for the enzyme in this species is believed to be ubiquinone. Couples the redox reaction to proton translocation (for every two electrons transferred, four hydrogen ions are translocated across the cytoplasmic membrane), and thus conserves the redox energy in a proton gradient. The sequence is that of NADH-quinone oxidoreductase subunit D from Xanthobacter autotrophicus (strain ATCC BAA-1158 / Py2).